The following is a 256-amino-acid chain: Imidazole glycerol phosphate synthase subunit HisF (256 aa).

Residues Asp-11 and Asp-130 contribute to the active site.

Belongs to the HisA/HisF family. In terms of assembly, heterodimer of HisH and HisF.

It is found in the cytoplasm. It carries out the reaction 5-[(5-phospho-1-deoxy-D-ribulos-1-ylimino)methylamino]-1-(5-phospho-beta-D-ribosyl)imidazole-4-carboxamide + L-glutamine = D-erythro-1-(imidazol-4-yl)glycerol 3-phosphate + 5-amino-1-(5-phospho-beta-D-ribosyl)imidazole-4-carboxamide + L-glutamate + H(+). The protein operates within amino-acid biosynthesis; L-histidine biosynthesis; L-histidine from 5-phospho-alpha-D-ribose 1-diphosphate: step 5/9. Functionally, IGPS catalyzes the conversion of PRFAR and glutamine to IGP, AICAR and glutamate. The HisF subunit catalyzes the cyclization activity that produces IGP and AICAR from PRFAR using the ammonia provided by the HisH subunit. The sequence is that of Imidazole glycerol phosphate synthase subunit HisF from Prochlorococcus marinus (strain MIT 9301).